A 440-amino-acid polypeptide reads, in one-letter code: Xaa-Pro dipeptidase (440 aa).

Mn(2+) contacts are provided by Asp244, Asp255, His335, Glu380, and Glu419.

The protein belongs to the peptidase M24B family. Bacterial-type prolidase subfamily. Requires Mn(2+) as cofactor.

The enzyme catalyses Xaa-L-Pro dipeptide + H2O = an L-alpha-amino acid + L-proline. Splits dipeptides with a prolyl residue in the C-terminal position. This Shewanella baltica (strain OS185) protein is Xaa-Pro dipeptidase.